The following is a 1574-amino-acid chain: Multiple epidermal growth factor-like domains protein 6 (1574 aa).

Positions 1-27 (MPVRAEARAAWRVVALALLLLPAMPAA) are cleaved as a signal peptide. The 83-residue stretch at 40 to 122 (MPHVCAEQKL…QKPGQEGCLS (83 aa)) folds into the EMI domain. 99 cysteine pairs are disulfide-bonded: Cys44–Cys108, Cys74–Cys80, Cys107–Cys120, Cys127–Cys138, Cys134–Cys147, Cys149–Cys162, Cys168–Cys179, Cys175–Cys188, Cys190–Cys203, Cys209–Cys220, Cys216–Cys230, Cys232–Cys245, Cys251–Cys262, Cys258–Cys271, Cys273–Cys286, Cys292–Cys303, Cys299–Cys312, Cys314–Cys327, Cys338–Cys349, Cys345–Cys358, Cys360–Cys373, Cys379–Cys389, Cys385–Cys398, Cys400–Cys411, Cys419–Cys430, Cys426–Cys439, Cys441–Cys454, Cys524–Cys537, Cys531–Cys544, Cys546–Cys555, Cys568–Cys580, Cys574–Cys587, Cys589–Cys598, Cys611–Cys623, Cys617–Cys630, Cys632–Cys641, Cys654–Cys668, Cys660–Cys675, Cys677–Cys686, Cys699–Cys711, Cys705–Cys718, Cys722–Cys731, Cys744–Cys755, Cys750–Cys762, Cys764–Cys773, Cys786–Cys799, Cys793–Cys806, Cys808–Cys817, Cys830–Cys842, Cys836–Cys849, Cys851–Cys860, Cys873–Cys886, Cys879–Cys893, Cys895–Cys904, Cys917–Cys929, Cys923–Cys936, Cys938–Cys947, Cys960–Cys972, Cys966–Cys979, Cys981–Cys990, Cys1003–Cys1015, Cys1009–Cys1022, Cys1024–Cys1033, Cys1046–Cys1058, Cys1052–Cys1065, Cys1067–Cys1076, Cys1089–Cys1101, Cys1095–Cys1108, Cys1110–Cys1119, Cys1132–Cys1144, Cys1138–Cys1151, Cys1153–Cys1162, Cys1175–Cys1187, Cys1181–Cys1194, Cys1196–Cys1205, Cys1218–Cys1231, Cys1224–Cys1238, Cys1240–Cys1249, Cys1262–Cys1274, Cys1268–Cys1281, Cys1283–Cys1292, Cys1305–Cys1317, Cys1311–Cys1324, Cys1326–Cys1335, Cys1348–Cys1360, Cys1354–Cys1367, Cys1369–Cys1378, Cys1391–Cys1403, Cys1397–Cys1410, Cys1412–Cys1421, Cys1434–Cys1446, Cys1440–Cys1453, Cys1455–Cys1464, Cys1477–Cys1489, Cys1483–Cys1496, Cys1498–Cys1507, Cys1520–Cys1532, Cys1526–Cys1539, and Cys1541–Cys1550. In terms of domain architecture, EGF-like 1; calcium-binding spans 123–163 (DVDECASANGGCEGPCCNTVGGFYCRCPPGYQLQGDGKTCQ). One can recognise an EGF-like 2; calcium-binding domain in the interval 164–204 (DVDECRAHNGGCQHRCVNTPGSYLCECKPGFRLHTDGRTCL). EGF-like domains lie at 205-246 (AISS…RRCV) and 247-287 (RRSP…KTCE). Residues 288 to 328 (DVDECALGLAQCAHGCLNTQGSFKCVCHAGYELGADGRQCY) enclose the EGF-like 5; calcium-binding domain. 2 consecutive EGF-like domains span residues 334-374 (IVNS…KTCI) and 375-412 (DIDDCANSPCCQQACANTPGGYECSCFAGYRLNTDGCG). The EGF-like 8; calcium-binding domain maps to 415–455 (DVDECASGHGGCEHHCSNLAGSFQCFCEAGYRLDEDRRGCT). 24 consecutive EGF-like domains span residues 520 to 556 (FGHDCSLTCDDCRNGGTCFPGQDGCDCPEGWTGIICN), 564 to 599 (FGKNCSSPCTCQNGGTCDPVLGACRCPPGVSGAHCE), 607 to 642 (YGKHCRKKCHCANRGRCHRLYGACLCDPGLYGRFCH), 650 to 687 (FGPGCSEDCLCEQSHTRSCNPKDGSCSCKAGFQGERCQ), 695 to 732 (FGPGCRHRCTCQPGVACDPVSGECRTQCPPGYQGEDCG), 740 to 774 (FGVNCSGSCSCVGAPCHRVTGECLCPPGKTGEDCG), 782 to 818 (WGLGCQEICPACEHGASCNPETGTCLCLPGFVGSRCQ), 826 to 861 (YGTGCQIRCACANDGHCDPTTGRCSCAPGWTGLSCQ), 869 to 905 (WGPDCIHPCNCSAGHGNCDAVSGLCLCEAGYEGPRCE), 913 to 948 (YGPSCEQKCRCEHGAACDHVSGACTCPAGWRGSFCE), 956 to 991 (FGLDCDSACNCSAGAPCDAVTGSCICPAGRWGPRCA), 999 to 1034 (FGLNCSQICTCFNGASCDSVTGQCHCAPGWMGPTCL), 1042 to 1077 (YGKNCQHSCLCRNGGRCDPILGQCTCPEGWTGLACE), 1085 to 1120 (YAAGCQLNCSCLHGGICDRLTGHCLCPAGWTGDKCQ), 1128 to 1163 (FGVHCEEHCACRKGASCHHVTGACFCPPGWRGPHCE), 1171 to 1206 (FGEACAQRCLCPTNASCHHVTGECRCPPGFTGLSCE), 1214 to 1250 (FGKDCEHLCQCPGETWACDPASGVCTCAAGYHGTGCL), 1258 to 1293 (YGPGCEHICKCLNGGTCDPATGACYCPAGFLGADCS), 1301 to 1336 (FGPSCAHVCACRQGAACDPVSGACICSPGKTGVRCE), 1344 to 1379 (FGKGCELKCACRNGGLCHATNGSCSCPLGWMGPHCE), 1387 to 1422 (YGAACLLECFCQNNGSCEPTTGACLCGPGFYGQACE), 1430 to 1465 (HGPGCQRVCECQQGAPCDPVSGQCLCPAGFHGQFCE), 1473 to 1508 (FGDGCLQQCNCHTGVPCDPISGLCLCPPGRTGAACD), and 1516 to 1551 (FGPGCALRCDCGGGADCDPISGQCHCVDSYMGPTCR). Over residues 1555 to 1568 (TQISSSRPAPQHPS) the composition is skewed to polar residues. The tract at residues 1555-1574 (TQISSSRPAPQHPSSRAMKH) is disordered.

Expressed in lung.

The protein localises to the secreted. This Rattus norvegicus (Rat) protein is Multiple epidermal growth factor-like domains protein 6 (Megf6).